A 162-amino-acid polypeptide reads, in one-letter code: Phosphopantetheine adenylyltransferase (162 aa).

Ser-11 contacts substrate. Residues 11-12 (SF) and His-19 contribute to the ATP site. Substrate-binding residues include Lys-43, Val-76, and Arg-90. Residues 91-93 (GLR), Glu-101, and 126-132 (HLYISSS) contribute to the ATP site.

Belongs to the bacterial CoaD family. As to quaternary structure, homohexamer. Mg(2+) is required as a cofactor.

The protein resides in the cytoplasm. The enzyme catalyses (R)-4'-phosphopantetheine + ATP + H(+) = 3'-dephospho-CoA + diphosphate. The protein operates within cofactor biosynthesis; coenzyme A biosynthesis; CoA from (R)-pantothenate: step 4/5. In terms of biological role, reversibly transfers an adenylyl group from ATP to 4'-phosphopantetheine, yielding dephospho-CoA (dPCoA) and pyrophosphate. The sequence is that of Phosphopantetheine adenylyltransferase from Streptococcus pneumoniae (strain Taiwan19F-14).